A 109-amino-acid polypeptide reads, in one-letter code: Probable endoribonuclease MazF5 (109 aa).

It belongs to the PemK/MazF family. Forms a complex with cognate antitoxin MazE5.

Its function is as follows. Toxic component of a type II toxin-antitoxin (TA) system. Upon expression in M.smegmatis inhibits colony formation. Its toxic effect is neutralized by coexpression with cognate antitoxin MazE5. Probably an endoribonuclease. This Mycobacterium tuberculosis (strain ATCC 25618 / H37Rv) protein is Probable endoribonuclease MazF5 (mazF5).